The sequence spans 73 residues: Large ribosomal subunit protein bL31 (73 aa).

Positions 16, 18, 38, and 41 each coordinate Zn(2+).

The protein belongs to the bacterial ribosomal protein bL31 family. Type A subfamily. Part of the 50S ribosomal subunit. Zn(2+) is required as a cofactor.

In terms of biological role, binds the 23S rRNA. This is Large ribosomal subunit protein bL31 from Vibrio parahaemolyticus serotype O3:K6 (strain RIMD 2210633).